A 424-amino-acid polypeptide reads, in one-letter code: Double homeobox protein 4 (424 aa).

The segment covering 1–10 (MALPTPSDST) has biased composition (polar residues). Disordered regions lie at residues 1–24 (MALP…RRRL), 72–102 (SRQL…TAVT), 218–362 (LQPS…LQEP), and 388–414 (QPLL…PLSE). DNA-binding regions (homeobox) lie at residues 19–78 (GRRR…LRQH) and 94–153 (GRRK…PGQG). The span at 265–274 (KSREDRDPQR) shows a compositional bias: basic and acidic residues. Low complexity-rich tracts occupy residues 278 to 302 (PGPC…LAPP) and 319 to 329 (AGAAWEPQAGA). Residues 327–424 (AGAAPPPQPA…EEYRALLEEL (98 aa)) form a required for interaction with EP300 and CREBBP, and for transcriptional activation of target genes region. Residues 405–424 (AASLEAPLSEEEYRALLEEL) are important for transcriptional activation of target genes.

The protein belongs to the paired homeobox family. As to quaternary structure, binds DNA as a monomer. Interacts (via C-terminus) with EP300 and CREBBP. In terms of tissue distribution, isoform 1: Does not seem to be expressed in normal muscle, but is detected in muscle of individuals with FSHD, and also in testis (at protein level). Isoform 1: Does not seem to be expressed in normal muscle, but in muscle of individuals with FSHD, where it may be toxic to cells. Isoform 2: Detected in skeletal muscle, fibroblasts and testis from healthy individuals.

The protein localises to the nucleus. Its subcellular location is the cytoplasm. Its function is as follows. Transcription factor that is selectively and transiently expressed in cleavage-stage embryos. Binds to double-stranded DNA elements with the consensus sequence 5'-TAATCTAATCA-3'. Binds to chromatin containing histone H3 acetylated at 'Lys-27' (H3K27ac) and promotes deacetylation of H3K27ac. In parallel, binds to chromatin that lacks histone H3 acetylation at 'Lys-27' (H3K27ac) and recruits EP300 and CREBBP to promote acetylation of histone H3 at 'Lys-27' at new sites. Involved in transcriptional regulation of numerous genes, primarily as transcriptional activator, but also mediates repression of a set of target genes. Promotes expression of ZSCAN4 and KDM4E, two proteins with essential roles during early embryogenesis. Promotes nuclear translocation of CTNNB1/beta-catenin and its subsequent activation of target genes. Heterologous expression in cultured embryonic stem cells mediates transcription of HERVL retrotransposons and transcripts derived from ACRO1 and HSATII satellite repeats. May activate expression of PITX1. May regulate microRNA (miRNA) expression. Inappropriate expression can inhibit myogenesis and promote apoptosis. Probably inactive as a transcriptional activator, due to the absence of the C-terminal region that is important for transcriptional activation. Can inhibit transcriptional activation mediated by isoform 1. Heterologous expression of isoform 2 has no deleterious effect on cell survival. This Homo sapiens (Human) protein is Double homeobox protein 4.